Here is a 434-residue protein sequence, read N- to C-terminus: Trigger factor (434 aa).

The PPIase FKBP-type domain occupies 160 to 245 (GDKVKMNFVG…LTEVQAANLP (86 aa)).

This sequence belongs to the FKBP-type PPIase family. Tig subfamily.

It is found in the cytoplasm. The enzyme catalyses [protein]-peptidylproline (omega=180) = [protein]-peptidylproline (omega=0). Functionally, involved in protein export. Acts as a chaperone by maintaining the newly synthesized protein in an open conformation. Functions as a peptidyl-prolyl cis-trans isomerase. This Shewanella baltica (strain OS185) protein is Trigger factor.